Reading from the N-terminus, the 647-residue chain is Protein arginine N-methyltransferase 7 (647 aa).

SAM-dependent MTase PRMT-type domains follow at residues 12 to 332 and 337 to 647; these read EREW…FSLW and GKDK…SEDS. Catalysis depends on residues Glu-140 and Glu-149.

The protein belongs to the class I-like SAM-binding methyltransferase superfamily. Protein arginine N-methyltransferase family. PRMT7 subfamily.

Its function is as follows. Arginine methyltransferase that can both catalyze the formation of omega-N monomethylarginine (MMA) and symmetrical dimethylarginine (sDMA). This is Protein arginine N-methyltransferase 7 (prmt-7) from Caenorhabditis elegans.